Here is a 148-residue protein sequence, read N- to C-terminus: Large ribosomal subunit protein uL15 (148 aa).

The tract at residues 12–52 (ERKNRKRVGRGGGSGWGGTSGKGHKGQNARSGGGVPAWFEG) is disordered. Residues 21-32 (RGGGSGWGGTSG) are compositionally biased toward gly residues.

Belongs to the universal ribosomal protein uL15 family. As to quaternary structure, part of the 50S ribosomal subunit.

Its function is as follows. Binds to the 23S rRNA. This chain is Large ribosomal subunit protein uL15, found in Maridesulfovibrio salexigens (strain ATCC 14822 / DSM 2638 / NCIMB 8403 / VKM B-1763) (Desulfovibrio salexigens).